A 72-amino-acid chain; its full sequence is Alpha-elapitoxin-Dv2b (72 aa).

5 disulfides stabilise this stretch: cysteine 3–cysteine 21, cysteine 14–cysteine 42, cysteine 27–cysteine 31, cysteine 46–cysteine 57, and cysteine 58–cysteine 63.

Belongs to the three-finger toxin family. Long-chain subfamily. Type II alpha-neurotoxin sub-subfamily. Neurotoxin 4.7.3 differs from 4.9.3 only in that Trp-26 has undergone partial photooxidation. Expressed by the venom gland.

The protein localises to the secreted. Binds with high affinity to muscular (alpha-1/CHRNA1) and neuronal (alpha-7/CHRNA7) nicotinic acetylcholine receptor (nAChR) and inhibits acetylcholine from binding to the receptor, thereby impairing neuromuscular and neuronal transmission. The chain is Alpha-elapitoxin-Dv2b from Dendroaspis viridis (Western green mamba).